We begin with the raw amino-acid sequence, 195 residues long: NADH-quinone oxidoreductase subunit C (195 aa).

It belongs to the complex I 30 kDa subunit family. As to quaternary structure, NDH-1 is composed of 14 different subunits. Subunits NuoB, C, D, E, F, and G constitute the peripheral sector of the complex.

The protein localises to the cell inner membrane. The catalysed reaction is a quinone + NADH + 5 H(+)(in) = a quinol + NAD(+) + 4 H(+)(out). In terms of biological role, NDH-1 shuttles electrons from NADH, via FMN and iron-sulfur (Fe-S) centers, to quinones in the respiratory chain. The immediate electron acceptor for the enzyme in this species is believed to be ubiquinone. Couples the redox reaction to proton translocation (for every two electrons transferred, four hydrogen ions are translocated across the cytoplasmic membrane), and thus conserves the redox energy in a proton gradient. The polypeptide is NADH-quinone oxidoreductase subunit C (Laribacter hongkongensis (strain HLHK9)).